The primary structure comprises 174 residues: N-terminal acetyltransferase B complex catalytic subunit NAA20 (174 aa).

The 150-residue stretch at 2 to 151 folds into the N-acetyltransferase domain; sequence TTIRRFSCND…DGLDMRKALS (150 aa).

It belongs to the acetyltransferase family. ARD1 subfamily.

The enzyme catalyses N-terminal L-methionyl-L-asparaginyl-[protein] + acetyl-CoA = N-terminal N(alpha)-acetyl-L-methionyl-L-asparaginyl-[protein] + CoA + H(+). It catalyses the reaction N-terminal L-methionyl-L-glutaminyl-[protein] + acetyl-CoA = N-terminal N(alpha)-acetyl-L-methionyl-L-glutaminyl-[protein] + CoA + H(+). It carries out the reaction N-terminal L-methionyl-L-aspartyl-[protein] + acetyl-CoA = N-terminal N(alpha)-acetyl-L-methionyl-L-aspartyl-[protein] + CoA + H(+). The catalysed reaction is N-terminal L-methionyl-L-glutamyl-[protein] + acetyl-CoA = N-terminal N(alpha)-acetyl-L-methionyl-L-glutamyl-[protein] + CoA + H(+). Catalytic subunit of the NatB N-alpha-acetyltransferase complex. Involved in plant immunity through the regulation of SNC1 stability. The protein is N-terminal acetyltransferase B complex catalytic subunit NAA20 of Arabidopsis thaliana (Mouse-ear cress).